The primary structure comprises 234 residues: MMNELFGEFLGTLILILLGNGVVAGVVLPKTKSNSSGWIVITMGWGIAVAVAVFVSGKLSPAYLNPAVTIGVALKGGLPWASVLPYILAQFAGAMLGQILVWLQFKPHYEAEENAGNILATFSTGPAIKDTVSNLISEILGTFVLVLTIFALGLYDFQAGIGTFAVGTLIVGIGLSLGGTTGYALNPARDLGPRIMHSILPIPNKGDGDWSYAWIPVVGPVIGAALAVLVFSLF.

6 helical membrane-spanning segments follow: residues 9-29, 37-57, 61-81, 83-103, 135-155, and 159-179; these read FLGT…VVLP, GWIV…FVSG, PAYL…LPWA, VLPY…LVWL, LISE…LGLY, and AGIG…SLGG. The NPA 1 motif lies at 65 to 67; it reads NPA. An NPA 2 motif is present at residues 186-188; the sequence is NPA. A helical membrane pass occupies residues 214–234; it reads WIPVVGPVIGAALAVLVFSLF.

This sequence belongs to the MIP/aquaporin (TC 1.A.8) family.

The protein localises to the cell membrane. The enzyme catalyses glycerol(in) = glycerol(out). Its function is as follows. Mediates glycerol diffusion across the cytoplasmic membrane via a pore-type mechanism. The protein is Glycerol uptake facilitator protein (glpF) of Streptococcus pneumoniae serotype 4 (strain ATCC BAA-334 / TIGR4).